Here is a 56-residue protein sequence, read N- to C-terminus: Large ribosomal subunit protein bL33 (56 aa).

This sequence belongs to the bacterial ribosomal protein bL33 family.

The chain is Large ribosomal subunit protein bL33 from Actinobacillus pleuropneumoniae serotype 5b (strain L20).